Reading from the N-terminus, the 124-residue chain is MPTINQLIRKGRLGLTHKKKVPALGESNPQRRGVCTKVYTTTPRKPNSALRKVARVKISGYGEVTAYIPGEGHNLQEHSVVLIRGGRVKDLPGVRYHIIRGALDLRGVQNRKKARSKYGVKKSG.

3-methylthioaspartic acid is present on Asp-90.

This sequence belongs to the universal ribosomal protein uS12 family. In terms of assembly, part of the 30S ribosomal subunit. Contacts proteins S8 and S17. May interact with IF1 in the 30S initiation complex.

Its function is as follows. With S4 and S5 plays an important role in translational accuracy. Functionally, interacts with and stabilizes bases of the 16S rRNA that are involved in tRNA selection in the A site and with the mRNA backbone. Located at the interface of the 30S and 50S subunits, it traverses the body of the 30S subunit contacting proteins on the other side and probably holding the rRNA structure together. The combined cluster of proteins S8, S12 and S17 appears to hold together the shoulder and platform of the 30S subunit. This is Small ribosomal subunit protein uS12 from Wolbachia pipientis wMel.